A 426-amino-acid chain; its full sequence is Serine--tRNA ligase (426 aa).

Residue T233–E235 coordinates L-serine. R264–E266 provides a ligand contact to ATP. L-serine is bound at residue E287. Residue E351–S354 coordinates ATP. S387 is an L-serine binding site.

It belongs to the class-II aminoacyl-tRNA synthetase family. Type-1 seryl-tRNA synthetase subfamily. As to quaternary structure, homodimer. The tRNA molecule binds across the dimer.

The protein resides in the cytoplasm. It catalyses the reaction tRNA(Ser) + L-serine + ATP = L-seryl-tRNA(Ser) + AMP + diphosphate + H(+). It carries out the reaction tRNA(Sec) + L-serine + ATP = L-seryl-tRNA(Sec) + AMP + diphosphate + H(+). Its pathway is aminoacyl-tRNA biosynthesis; selenocysteinyl-tRNA(Sec) biosynthesis; L-seryl-tRNA(Sec) from L-serine and tRNA(Sec): step 1/1. Catalyzes the attachment of serine to tRNA(Ser). Is also able to aminoacylate tRNA(Sec) with serine, to form the misacylated tRNA L-seryl-tRNA(Sec), which will be further converted into selenocysteinyl-tRNA(Sec). The chain is Serine--tRNA ligase from Pseudomonas paraeruginosa (strain DSM 24068 / PA7) (Pseudomonas aeruginosa (strain PA7)).